We begin with the raw amino-acid sequence, 353 residues long: Holliday junction branch migration complex subunit RuvB (353 aa).

A large ATPase domain (RuvB-L) region spans residues 1–183 (MNEPRIVAPQ…FGATYRLDFY (183 aa)). Residues L22, R23, G64, K67, T68, T69, 130–132 (EDF), R173, Y183, and R220 contribute to the ATP site. Residue T68 participates in Mg(2+) binding. Positions 184–254 (DTAALRAIVE…LARLALDQLA (71 aa)) are small ATPAse domain (RuvB-S). Positions 257–353 (ELGLDEVDRL…HAASERSSDA (97 aa)) are head domain (RuvB-H). The DNA site is built by R312 and R317.

This sequence belongs to the RuvB family. Homohexamer. Forms an RuvA(8)-RuvB(12)-Holliday junction (HJ) complex. HJ DNA is sandwiched between 2 RuvA tetramers; dsDNA enters through RuvA and exits via RuvB. An RuvB hexamer assembles on each DNA strand where it exits the tetramer. Each RuvB hexamer is contacted by two RuvA subunits (via domain III) on 2 adjacent RuvB subunits; this complex drives branch migration. In the full resolvosome a probable DNA-RuvA(4)-RuvB(12)-RuvC(2) complex forms which resolves the HJ.

Its subcellular location is the cytoplasm. It catalyses the reaction ATP + H2O = ADP + phosphate + H(+). Functionally, the RuvA-RuvB-RuvC complex processes Holliday junction (HJ) DNA during genetic recombination and DNA repair, while the RuvA-RuvB complex plays an important role in the rescue of blocked DNA replication forks via replication fork reversal (RFR). RuvA specifically binds to HJ cruciform DNA, conferring on it an open structure. The RuvB hexamer acts as an ATP-dependent pump, pulling dsDNA into and through the RuvAB complex. RuvB forms 2 homohexamers on either side of HJ DNA bound by 1 or 2 RuvA tetramers; 4 subunits per hexamer contact DNA at a time. Coordinated motions by a converter formed by DNA-disengaged RuvB subunits stimulates ATP hydrolysis and nucleotide exchange. Immobilization of the converter enables RuvB to convert the ATP-contained energy into a lever motion, pulling 2 nucleotides of DNA out of the RuvA tetramer per ATP hydrolyzed, thus driving DNA branch migration. The RuvB motors rotate together with the DNA substrate, which together with the progressing nucleotide cycle form the mechanistic basis for DNA recombination by continuous HJ branch migration. Branch migration allows RuvC to scan DNA until it finds its consensus sequence, where it cleaves and resolves cruciform DNA. In Thermomicrobium roseum (strain ATCC 27502 / DSM 5159 / P-2), this protein is Holliday junction branch migration complex subunit RuvB.